The chain runs to 25 residues: Snake venom metalloproteinase catroxase (25 aa).

E9 lines the Ca(2+) pocket.

Belongs to the venom metalloproteinase (M12B) family. As to quaternary structure, monomer. Requires Zn(2+) as cofactor. Expressed by the venom gland.

The protein localises to the secreted. Inhibited by EDTA, beta-mercaptoethanol, but not by PMSF, p-tosyl-L-phenylalanine chloromethyl ketone, p-tosyl-L-lysine chloromethyl ketone, soybean trypsin inhibitor and aprotinin. Metalloprotease that is highly active against alpha-(FGA) and beta-chains (FGB) of fibrinogen molecules. This is Snake venom metalloproteinase catroxase from Crotalus atrox (Western diamondback rattlesnake).